Reading from the N-terminus, the 166-residue chain is MAAFATAEACDSNAELISNGDLRALHPIFKIYGQRRCFSGPIVTLKVFEDNVLVRNQLETKGEGGVLVIDGGGSMRCALVGGNLGQLAQNNGWSGIVVNGCVRDVDEINDCDVGVRALGSNPLKSTKKGHGEKNVPVHIGGTLIRDGEWLYADSDGILISKTELSV.

Ala2 carries the N-acetylalanine modification. Substrate-binding positions include Gly81–Leu84 and Arg103. Residue Asp104 coordinates a divalent metal cation.

Belongs to the class II aldolase/RraA-like family. As to quaternary structure, homotrimer. A divalent metal cation is required as a cofactor.

The catalysed reaction is 4-hydroxy-4-methyl-2-oxoglutarate = 2 pyruvate. The enzyme catalyses oxaloacetate + H(+) = pyruvate + CO2. Catalyzes the aldol cleavage of 4-hydroxy-4-methyl-2-oxoglutarate (HMG) into 2 molecules of pyruvate. Also contains a secondary oxaloacetate (OAA) decarboxylase activity due to the common pyruvate enolate transition state formed following C-C bond cleavage in the retro-aldol and decarboxylation reactions. This chain is Putative 4-hydroxy-4-methyl-2-oxoglutarate aldolase 3, found in Arabidopsis thaliana (Mouse-ear cress).